The following is a 629-amino-acid chain: UvrABC system protein C (629 aa).

Positions 12–91 (DRPGCYLFKD…IKKHKPKYNI (80 aa)) constitute a GIY-YIG domain. In terms of domain architecture, UVR spans 200 to 235 (QEVLERLRARMEQAAERLEFERAAELRDQIRAIEKV).

This sequence belongs to the UvrC family. As to quaternary structure, interacts with UvrB in an incision complex.

The protein resides in the cytoplasm. Its function is as follows. The UvrABC repair system catalyzes the recognition and processing of DNA lesions. UvrC both incises the 5' and 3' sides of the lesion. The N-terminal half is responsible for the 3' incision and the C-terminal half is responsible for the 5' incision. This chain is UvrABC system protein C, found in Symbiobacterium thermophilum (strain DSM 24528 / JCM 14929 / IAM 14863 / T).